The sequence spans 111 residues: Universal stress protein B (111 aa).

A run of 2 helical transmembrane segments spans residues 1-21 and 90-110; these read MFST…NMMR and FILT…MLIW.

Belongs to the universal stress protein B family.

Its subcellular location is the cell inner membrane. The protein is Universal stress protein B of Photorhabdus laumondii subsp. laumondii (strain DSM 15139 / CIP 105565 / TT01) (Photorhabdus luminescens subsp. laumondii).